A 554-amino-acid chain; its full sequence is Phosphoglucomutase (554 aa).

R21 contributes to the alpha-D-glucose 1,6-bisphosphate binding site. Position 111 is a phosphothreonine (T111). An alpha-D-glucose 1,6-bisphosphate-binding site is contributed by S113. The active-site Phosphoserine intermediate is the S113. 4 residues coordinate Mg(2+): S113, D278, D280, and D282. S113 carries the phosphoserine modification. D282, R283, T346, E365, S367, and K378 together coordinate alpha-D-glucose 1,6-bisphosphate.

The protein belongs to the phosphohexose mutase family. As to quaternary structure, monomer. Mg(2+) is required as a cofactor.

It is found in the cytoplasm. The protein resides in the nucleus. It carries out the reaction alpha-D-glucose 1-phosphate = alpha-D-glucose 6-phosphate. It catalyses the reaction O-phospho-L-seryl-[protein] + alpha-D-glucose 1-phosphate = alpha-D-glucose 1,6-bisphosphate + L-seryl-[protein]. The enzyme catalyses alpha-D-glucose 1,6-bisphosphate + L-seryl-[protein] = O-phospho-L-seryl-[protein] + alpha-D-glucose 6-phosphate. Its function is as follows. Catalyzes the reversible isomerization of alpha-D-glucose 1-phosphate to alpha-D-glucose 6-phosphate. The mechanism proceeds via the intermediate compound alpha-D-glucose 1,6-bisphosphate. Key enzyme in hexose metabolism. The reverse reaction is an essential step for biosynthesis because glucose 1-phosphate is the starting point for the synthesis of UDP-glucose, which acts as a precursor for the synthesis of oligosaccharides and trehalose. This Schizosaccharomyces pombe (strain 972 / ATCC 24843) (Fission yeast) protein is Phosphoglucomutase.